A 421-amino-acid polypeptide reads, in one-letter code: MTHLNLRLKDVDPEIFEAMEKELSRQREKIELIASENFVSRAVMEAMGSHLTNKYAEGLPGKRYYGGCEYVDVVENLARERAKKLFGAEHVNVQPHSGAQANMAAYMAFLEPGDTVLGMNLAHGGHLTHGSPVNFSGKLYNFVSYGVEPDTEKINYEKVFELAYKHKPKMIVAGASAYPRVIDFKHLKEIADEVGAYLMVDMAHIAGLVAAGLHPSPIPYADVVTTTTHKTLRGPRGGVIFCKAEHAAKIDKTVFPGVQGGPLMHVIAAKAVAFKEALSPEFREYQQQVVNNAKALAEELKKQGLRLVSGGTDNHLMLVDVRPVGLTGKRAEQLLDEIGVTVNKNAIPYDPESPNVTSGIRIGTPAVTTRGMKEGEMAEIAEIIALVLKNPENEDKHREAARKVRDLLNRFPLYDKLPYND.

(6S)-5,6,7,8-tetrahydrofolate contacts are provided by residues Leu-121 and 125 to 127 (GHL). Residue Lys-230 is modified to N6-(pyridoxal phosphate)lysine.

This sequence belongs to the SHMT family. In terms of assembly, homodimer. It depends on pyridoxal 5'-phosphate as a cofactor.

The protein resides in the cytoplasm. The enzyme catalyses (6R)-5,10-methylene-5,6,7,8-tetrahydrofolate + glycine + H2O = (6S)-5,6,7,8-tetrahydrofolate + L-serine. The protein operates within one-carbon metabolism; tetrahydrofolate interconversion. It functions in the pathway amino-acid biosynthesis; glycine biosynthesis; glycine from L-serine: step 1/1. Functionally, catalyzes the reversible interconversion of serine and glycine with tetrahydrofolate (THF) serving as the one-carbon carrier. This reaction serves as the major source of one-carbon groups required for the biosynthesis of purines, thymidylate, methionine, and other important biomolecules. Also exhibits THF-independent aldolase activity toward beta-hydroxyamino acids, producing glycine and aldehydes, via a retro-aldol mechanism. This chain is Serine hydroxymethyltransferase, found in Carboxydothermus hydrogenoformans (strain ATCC BAA-161 / DSM 6008 / Z-2901).